A 71-amino-acid polypeptide reads, in one-letter code: Brevinin-1SN1 (71 aa).

A signal peptide spans 1–22; sequence MFTMKKPLLLLFFLGTINLSLC. The propeptide at 23–45 is removed in mature form; sequence EEERNADEEEKRDGDDEMDAEVE. A disulfide bridge links Cys65 with Cys71.

It belongs to the frog skin active peptide (FSAP) family. Brevinin subfamily. Expressed by the skin glands.

The protein localises to the secreted. Its function is as follows. Antimicrobial peptide. Active against some Gram-negative and a variety of Gram-positive bacterial strains. Active against fungus C.glabrata 090902 but not against C.albicans ATCC 10231. Shows hemolytic activity against human erythrocytes. The protein is Brevinin-1SN1 of Sylvirana spinulosa (Fine-spined frog).